We begin with the raw amino-acid sequence, 230 residues long: Uracil-DNA glycosylase (230 aa).

Asp72 functions as the Proton acceptor in the catalytic mechanism.

It belongs to the uracil-DNA glycosylase (UDG) superfamily. UNG family.

It is found in the cytoplasm. The catalysed reaction is Hydrolyzes single-stranded DNA or mismatched double-stranded DNA and polynucleotides, releasing free uracil.. Excises uracil residues from the DNA which can arise as a result of misincorporation of dUMP residues by DNA polymerase or due to deamination of cytosine. This is Uracil-DNA glycosylase from Wolinella succinogenes (strain ATCC 29543 / DSM 1740 / CCUG 13145 / JCM 31913 / LMG 7466 / NCTC 11488 / FDC 602W) (Vibrio succinogenes).